We begin with the raw amino-acid sequence, 910 residues long: DNA mismatch repair protein MutS (910 aa).

The span at 1–11 shows a compositional bias: basic and acidic residues; that stretch reads MEAKVEEKEPE. The tract at residues 1–21 is disordered; it reads MEAKVEEKEPEPVENAGPDAP. 658–665 provides a ligand contact to ATP; sequence GPNMGGKS.

The protein belongs to the DNA mismatch repair MutS family.

Its function is as follows. This protein is involved in the repair of mismatches in DNA. It is possible that it carries out the mismatch recognition step. This protein has a weak ATPase activity. The protein is DNA mismatch repair protein MutS of Brucella abortus (strain 2308).